The sequence spans 501 residues: Endoglucanase 8 (501 aa).

The first 35 residues, 1–35 (MKPRSSRDGHNAAAAAALLLAALVLSGDVLPAVVA), serve as a signal peptide directing secretion. The Nucleophile role is filled by Asp95. N-linked (GlcNAc...) asparagine glycosylation is present at Asn298. His414 is a catalytic residue. Asn462 carries an N-linked (GlcNAc...) asparagine glycan. Residue Asp465 is part of the active site. The N-linked (GlcNAc...) asparagine glycan is linked to Asn469. Glu474 is an active-site residue.

This sequence belongs to the glycosyl hydrolase 9 (cellulase E) family.

It is found in the secreted. It carries out the reaction Endohydrolysis of (1-&gt;4)-beta-D-glucosidic linkages in cellulose, lichenin and cereal beta-D-glucans.. The polypeptide is Endoglucanase 8 (Oryza sativa subsp. japonica (Rice)).